We begin with the raw amino-acid sequence, 447 residues long: Xylose isomerase (447 aa).

Active-site residues include histidine 102 and aspartate 105. Positions 233, 269, 272, 297, 308, 310, and 340 each coordinate Mg(2+).

The protein belongs to the xylose isomerase family. In terms of assembly, homotetramer. Requires Mg(2+) as cofactor.

Its subcellular location is the cytoplasm. It carries out the reaction alpha-D-xylose = alpha-D-xylulofuranose. The protein is Xylose isomerase of Pediococcus pentosaceus (strain ATCC 25745 / CCUG 21536 / LMG 10740 / 183-1w).